Here is a 159-residue protein sequence, read N- to C-terminus: RNA pyrophosphohydrolase (159 aa).

In terms of domain architecture, Nudix hydrolase spans 6-149 (GFRPNVGIIL…KREVYRRALK (144 aa)). A Nudix box motif is present at residues 38-59 (GGINPQETPEDALYRELNEEVG).

Belongs to the Nudix hydrolase family. RppH subfamily. Requires a divalent metal cation as cofactor.

Its function is as follows. Accelerates the degradation of transcripts by removing pyrophosphate from the 5'-end of triphosphorylated RNA, leading to a more labile monophosphorylated state that can stimulate subsequent ribonuclease cleavage. The sequence is that of RNA pyrophosphohydrolase from Pseudomonas savastanoi pv. phaseolicola (strain 1448A / Race 6) (Pseudomonas syringae pv. phaseolicola (strain 1448A / Race 6)).